A 473-amino-acid polypeptide reads, in one-letter code: RUN domain-containing protein 3B (473 aa).

The segment at 1–24 (MASRSLGGLSGIRGGGGGGGKKSL) is disordered. Residues 8 to 21 (GLSGIRGGGGGGGK) are compositionally biased toward gly residues. Position 13 is an omega-N-methylarginine (Arg-13). One can recognise an RUN domain in the interval 57 to 206 (DDSSPEFNNF…IDFSFCLKGE (150 aa)). 2 positions are modified to phosphoserine: Ser-232 and Ser-233. A coiled-coil region spans residues 317 to 342 (AHKLEKEQLEYIIVELQDQLTVLKNN). Positions 399-422 (SLSQTSLDPGQSQEGDGKQDTLNV) are enriched in polar residues. The interval 399 to 428 (SLSQTSLDPGQSQEGDGKQDTLNVMSEGKE) is disordered.

The protein belongs to the RUNDC3 family. As to quaternary structure, interacts with RAP2A. As to expression, isoform 2 is expressed at high levels in brain, thymus, ovary, testis, leukocyte, liver, small intestine and prostate. Isoform 1 is expressed in the brain, testis and adrenal gland. It is activated in tumorigenic breast cancer cell lines and in the primary tumor of breast cancer patients. Activation also correlates with metastatic lymph node invasion and can be detected in metastatic epithelial cells from the lymph nodes and in the bone marrow of patients.

This Homo sapiens (Human) protein is RUN domain-containing protein 3B (RUNDC3B).